The primary structure comprises 59 residues: Large ribosomal subunit protein bL32 (59 aa).

Residues 1-16 are compositionally biased toward basic residues; sequence MAVPKRKTSPSKRGMR. The interval 1-59 is disordered; sequence MAVPKRKTSPSKRGMRRSADALKAPTYVEDKNSGELRRPHHIDLKSGMYRGRQVLEAKE. Over residues 28–44 the composition is skewed to basic and acidic residues; that stretch reads VEDKNSGELRRPHHIDL.

The protein belongs to the bacterial ribosomal protein bL32 family.

The sequence is that of Large ribosomal subunit protein bL32 from Brucella anthropi (strain ATCC 49188 / DSM 6882 / CCUG 24695 / JCM 21032 / LMG 3331 / NBRC 15819 / NCTC 12168 / Alc 37) (Ochrobactrum anthropi).